We begin with the raw amino-acid sequence, 131 residues long: Secreted RxLR effector protein 45 (131 aa).

Positions 1–16 are cleaved as a signal peptide; the sequence is MSIFIFISLVLGLAHQ. The short motif at 56-59 is the RxLR element; the sequence is RPLR. Asn-128 carries an N-linked (GlcNAc...) asparagine glycan.

The protein belongs to the RxLR effector family.

The protein localises to the secreted. The protein resides in the host nucleus. Secreted effector that completely suppresses the host cell death induced by cell death-inducing proteins. The protein is Secreted RxLR effector protein 45 of Plasmopara viticola (Downy mildew of grapevine).